Here is a 239-residue protein sequence, read N- to C-terminus: Ribonuclease 3 (239 aa).

In terms of domain architecture, RNase III spans 11–133 (HAAIQKKLGY…MFAAVSFDAD (123 aa)). Glu-46 lines the Mg(2+) pocket. Asp-50 is an active-site residue. Asp-119 and Glu-122 together coordinate Mg(2+). The region spanning 160-230 (DGKTALQEAL…AKEALKWLEE (71 aa)) is the DRBM domain.

It belongs to the ribonuclease III family. Homodimer. Requires Mg(2+) as cofactor.

It localises to the cytoplasm. It catalyses the reaction Endonucleolytic cleavage to 5'-phosphomonoester.. Digests double-stranded RNA. Involved in the processing of primary rRNA transcript to yield the immediate precursors to the large and small rRNAs (23S and 16S). Also processes some mRNAs, and tRNAs when they are encoded in the rRNA operon. In terms of biological role, CRISPR (clustered regularly interspaced short palindromic repeat) is an adaptive immune system that provides protection against mobile genetic elements (viruses, transposable elements and conjugative plasmids). CRISPR clusters contain spacers, sequences complementary to antecedent mobile elements, and target invading nucleic acids. CRISPR clusters are transcribed and processed into CRISPR RNA (crRNA). In this organism endogenous ribonuclease 3 and Cas9 are required for correct coprocessing of pre-crRNA and the trans-encoded small RNA (tracrRNA). Cas9, crRNA and tracRNA are required for cleavage of invading DNA. Involved in 3'-end processing but not 5'-end processing of crRNA and tracrRNA. This is Ribonuclease 3 from Neisseria meningitidis serogroup C (strain 8013).